The sequence spans 571 residues: Streptolysin O (571 aa).

An N-terminal signal peptide occupies residues 1–33 (MSNKKTFKKYSRVAGLLTVALIIGNLVTANAES). Disordered stretches follow at residues 32-56 (ESNK…ESSE) and 81-108 (KEMP…HTEE). Over residues 37–48 (NTASTETTTTNE) the composition is skewed to low complexity. The next 4 membrane-spanning stretches (beta stranded) occupy residues 260–273 (KSQI…NSKI), 280–289 (IDFKSISKGE), 358–367 (SNDVEAAFSA), and 375–387 (KTNG…LENS). Residues 529 to 539 (ECTGLAWEWWR) carry the Conserved undecapeptide motif. Thr561 is a short sequence motif (cholesterol binding).

This sequence belongs to the cholesterol-dependent cytolysin family. In terms of assembly, homooligomeric pore complex of 35 to 50 subunits; when inserted in the host membrane.

Its subcellular location is the secreted. It is found in the host cell membrane. In terms of biological role, a cholesterol-dependent toxin that causes cytolysis by forming pores in cholesterol containing host membranes. After binding to target membranes, the protein undergoes a major conformation change, leading to its insertion in the host membrane and formation of an oligomeric pore complex. Cholesterol is required for binding to host membranes, membrane insertion and pore formation; cholesterol binding is mediated by a Thr-Leu pair in the C-terminus. Can be reversibly inactivated by oxidation. This is Streptolysin O (slo) from Streptococcus pyogenes serotype M6 (strain ATCC BAA-946 / MGAS10394).